The following is a 403-amino-acid chain: Dihydroorotase (403 aa).

Residues H48 and H50 each coordinate Zn(2+). Substrate is bound by residues 50-52 (HLR) and N82. 4 residues coordinate Zn(2+): E140, H172, H211, and D277. D277 is a catalytic residue. H281 is a substrate binding site.

The protein belongs to the metallo-dependent hydrolases superfamily. DHOase family. Class I DHOase subfamily. Zn(2+) serves as cofactor.

It catalyses the reaction (S)-dihydroorotate + H2O = N-carbamoyl-L-aspartate + H(+). The protein operates within pyrimidine metabolism; UMP biosynthesis via de novo pathway; (S)-dihydroorotate from bicarbonate: step 3/3. Its function is as follows. Catalyzes the reversible cyclization of carbamoyl aspartate to dihydroorotate. The polypeptide is Dihydroorotase (Archaeoglobus fulgidus (strain ATCC 49558 / DSM 4304 / JCM 9628 / NBRC 100126 / VC-16)).